The primary structure comprises 410 residues: Cysteine desulfurase IscS (410 aa).

Pyridoxal 5'-phosphate contacts are provided by residues 80–81 (AT), Asn160, Gln188, and 208–210 (SGH). N6-(pyridoxal phosphate)lysine is present on Lys211. Thr248 serves as a coordination point for pyridoxal 5'-phosphate. The active-site Cysteine persulfide intermediate is Cys334. Position 334 (Cys334) interacts with [2Fe-2S] cluster.

It belongs to the class-V pyridoxal-phosphate-dependent aminotransferase family. NifS/IscS subfamily. In terms of assembly, homodimer. Forms a heterotetramer with IscU, interacts with other sulfur acceptors. Pyridoxal 5'-phosphate serves as cofactor.

The protein resides in the cytoplasm. It carries out the reaction (sulfur carrier)-H + L-cysteine = (sulfur carrier)-SH + L-alanine. Its pathway is cofactor biosynthesis; iron-sulfur cluster biosynthesis. In terms of biological role, master enzyme that delivers sulfur to a number of partners involved in Fe-S cluster assembly, tRNA modification or cofactor biosynthesis. Catalyzes the removal of elemental sulfur atoms from cysteine to produce alanine. Functions as a sulfur delivery protein for Fe-S cluster synthesis onto IscU, an Fe-S scaffold assembly protein, as well as other S acceptor proteins. The chain is Cysteine desulfurase IscS from Rickettsia conorii (strain ATCC VR-613 / Malish 7).